Consider the following 248-residue polypeptide: Small ribosomal subunit protein uS3 (248 aa).

The KH type-2 domain maps to 39 to 107; it reads IRQMLLKQLK…EVFINIVEIR (69 aa). Residues 214-248 are disordered; the sequence is AVDKRMTAESEGPSSGRPPRRDRDRDRDRDRDSAA. Positions 232–248 are enriched in basic and acidic residues; the sequence is PRRDRDRDRDRDRDSAA.

Belongs to the universal ribosomal protein uS3 family. As to quaternary structure, part of the 30S ribosomal subunit. Forms a tight complex with proteins S10 and S14.

Binds the lower part of the 30S subunit head. Binds mRNA in the 70S ribosome, positioning it for translation. This is Small ribosomal subunit protein uS3 from Azorhizobium caulinodans (strain ATCC 43989 / DSM 5975 / JCM 20966 / LMG 6465 / NBRC 14845 / NCIMB 13405 / ORS 571).